A 142-amino-acid polypeptide reads, in one-letter code: Snaclec GPIB-binding protein subunit alpha (142 aa).

Cystine bridges form between Cys-6/Cys-17, Cys-39/Cys-136, and Cys-111/Cys-128. The 125-residue stretch at 13-137 (HRQYCYKFFQ…CVEGNPFVCK (125 aa)) folds into the C-type lectin domain.

It belongs to the snaclec family. As to quaternary structure, heterodimer of subunits alpha and beta; disulfide-linked. In terms of tissue distribution, expressed by the venom gland.

Its subcellular location is the secreted. In terms of biological role, binds to platelet GPIb (subunit alpha) (GP1BA) and functions as a receptor blocker for vWF binding to GPIb. The platelet GPIb-binding site resides on the GPIB-BP subunit beta and not on the alpha subunit. At a final concentration of 104 nM totally abolishes vWF-dependent shear-induced platelet aggregation (SIPA) at a high shear stress, but had no effect on SIPA at a low shear stress. This is Snaclec GPIB-binding protein subunit alpha from Bothrops jararaca (Jararaca).